Here is a 711-residue protein sequence, read N- to C-terminus: Ribosomal RNA large subunit methyltransferase K/L (711 aa).

Positions 42 to 153 (DAQRAVLWSR…KGRATISVDL (112 aa)) constitute a THUMP domain.

Belongs to the methyltransferase superfamily. RlmKL family.

The protein resides in the cytoplasm. The enzyme catalyses guanosine(2445) in 23S rRNA + S-adenosyl-L-methionine = N(2)-methylguanosine(2445) in 23S rRNA + S-adenosyl-L-homocysteine + H(+). The catalysed reaction is guanosine(2069) in 23S rRNA + S-adenosyl-L-methionine = N(2)-methylguanosine(2069) in 23S rRNA + S-adenosyl-L-homocysteine + H(+). Its function is as follows. Specifically methylates the guanine in position 2445 (m2G2445) and the guanine in position 2069 (m7G2069) of 23S rRNA. This Xanthomonas campestris pv. campestris (strain B100) protein is Ribosomal RNA large subunit methyltransferase K/L.